Here is a 114-residue protein sequence, read N- to C-terminus: UPF0145 protein STK_10800 (114 aa).

This sequence belongs to the UPF0145 family.

The sequence is that of UPF0145 protein STK_10800 from Sulfurisphaera tokodaii (strain DSM 16993 / JCM 10545 / NBRC 100140 / 7) (Sulfolobus tokodaii).